The sequence spans 260 residues: CD40 ligand (260 aa).

At 1–22 (MIETYSQTAPRSVATGPPVSMK) the chain is on the cytoplasmic side. The helical; Signal-anchor for type II membrane protein transmembrane segment at 23–46 (IFMYLLTVFLITQMIGSALFAVYL) threads the bilayer. Residues 47–260 (HRRLDKIEDE…GFTSFGLLKL (214 aa)) are Extracellular-facing. One can recognise a THD domain in the interval 121-260 (IAAHVISEAS…GFTSFGLLKL (140 aa)). Cys-177 and Cys-217 are oxidised to a cystine. Asn-239 is a glycosylation site (N-linked (GlcNAc...) asparagine).

Belongs to the tumor necrosis factor family. Homotrimer. Interacts with CD28. CD40 ligand, soluble form: Exists as either a monomer or a homotrimer. Forms a ternary complex between CD40 and integrins for CD40-CD40LG signaling. In terms of processing, the soluble form derives from the membrane form by proteolytic processing.

The protein resides in the cell membrane. Its subcellular location is the cell surface. The protein localises to the secreted. Cytokine that acts as a ligand to CD40/TNFRSF5. Costimulates T-cell proliferation and cytokine production. Its cross-linking on T-cells generates a costimulatory signal which enhances the production of IL4 and IL10 in conjunction with the TCR/CD3 ligation and CD28 costimulation. Induces the activation of NF-kappa-B. Induces the activation of kinases MAPK8 and PAK2 in T-cells. Mediates B-cell proliferation in the absence of co-stimulus as well as IgE production in the presence of IL4. Involved in immunoglobulin class switching. Its function is as follows. Acts as a ligand for integrins, specifically ITGA5:ITGB1 and ITGAV:ITGB3; both integrins and the CD40 receptor are required for activation of CD40-CD40LG signaling, which have cell-type dependent effects, such as B-cell activation, NF-kappa-B signaling and anti-apoptotic signaling. The chain is CD40 ligand (CD40LG) from Canis lupus familiaris (Dog).